A 1443-amino-acid chain; its full sequence is Cleavage and polyadenylation specificity factor subunit 1 (1443 aa).

4 disordered regions span residues 404–435 (PASA…AAGK), 546–570 (EEDN…DDGR), 715–777 (GGAR…PAPF), and 901–921 (FREK…AEEG). The span at 410–419 (EAADKEEPPS) shows a compositional bias: basic and acidic residues. Serine 756 and serine 766 each carry phosphoserine. Over residues 758–775 (SKEEARRSSQPPADRDPA) the composition is skewed to basic and acidic residues. A Nuclear localization signal motif is present at residues 893-908 (KKVPHNINFREKKPKP).

Belongs to the CPSF1 family. As to quaternary structure, component of the cleavage and polyadenylation specificity factor (CPSF) complex, composed of CPSF1, CPSF2, CPSF3, CPSF4 and FIP1L1. Found in a complex with CPSF1, FIP1L1 and PAPOLA. Interacts with FIP1L1, TENT2/GLD2 and SRRM1. Interacts with TUT1; the interaction is direct and mediates the recruitment of the CPSF complex on the 3'UTR of selected pre-mRNAs. The N-terminus is blocked. In terms of tissue distribution, widely expressed, with high expression in the retina.

The protein localises to the nucleus. Its subcellular location is the nucleoplasm. Component of the cleavage and polyadenylation specificity factor (CPSF) complex that plays a key role in pre-mRNA 3'-end formation, recognizing the AAUAAA signal sequence and interacting with poly(A) polymerase and other factors to bring about cleavage and poly(A) addition. This subunit is involved in the RNA recognition step of the polyadenylation reaction. May play a role in eye morphogenesis and the development of retinal ganglion cell projections to the midbrain. The sequence is that of Cleavage and polyadenylation specificity factor subunit 1 (CPSF1) from Homo sapiens (Human).